Here is a 340-residue protein sequence, read N- to C-terminus: ATP-dependent 6-phosphofructokinase (340 aa).

Gly-11 contacts ATP. Residue 21-25 (RAVVR) coordinates ADP. ATP contacts are provided by residues 72–73 (RY) and 102–105 (GDGS). Mg(2+) is bound at residue Asp-103. 125-127 (TID) provides a ligand contact to substrate. Asp-127 (proton acceptor) is an active-site residue. Residue Arg-154 participates in ADP binding. Residues Arg-162 and 169–171 (MGR) each bind substrate. ADP contacts are provided by residues 185 to 187 (GAD) and 213 to 215 (KHH). Substrate contacts are provided by residues Glu-222, Arg-244, and 250–253 (HLLR).

It belongs to the phosphofructokinase type A (PFKA) family. ATP-dependent PFK group I subfamily. Prokaryotic clade 'B1' sub-subfamily. Homotetramer. It depends on Mg(2+) as a cofactor.

It localises to the cytoplasm. The catalysed reaction is beta-D-fructose 6-phosphate + ATP = beta-D-fructose 1,6-bisphosphate + ADP + H(+). The protein operates within carbohydrate degradation; glycolysis; D-glyceraldehyde 3-phosphate and glycerone phosphate from D-glucose: step 3/4. With respect to regulation, allosterically activated by ADP and other diphosphonucleosides, and allosterically inhibited by phosphoenolpyruvate. Its function is as follows. Catalyzes the phosphorylation of D-fructose 6-phosphate to fructose 1,6-bisphosphate by ATP, the first committing step of glycolysis. This is ATP-dependent 6-phosphofructokinase from Streptococcus agalactiae serotype Ia (strain ATCC 27591 / A909 / CDC SS700).